Here is a 279-residue protein sequence, read N- to C-terminus: BEN domain-containing protein 6 (279 aa).

Polar residues predominate over residues 1–15; it reads MQKIVQTDEITNTQA. Disordered regions lie at residues 1 to 65 and 134 to 172; these read MQKI…LAEL and RATNNSSPDSFASTCSNSNSNSSSPVSLKPEEEHQTDEK. A coiled-coil region spans residues 62 to 99; the sequence is LAELSKEELCAKIKSLKEKLTNTRKENSRLRQSLVMLQ. The span at 134–148 shows a compositional bias: polar residues; that stretch reads RATNNSSPDSFASTC. A compositionally biased stretch (basic and acidic residues) spans 162–172; that stretch reads KPEEEHQTDEK. One can recognise a BEN domain in the interval 171 to 271; sequence EKQFQIEKWQ…NCTKKPNLSK (101 aa).

In terms of assembly, interacts (via BEN domain) with RBPJ.

The protein resides in the nucleus. In terms of biological role, acts as a corepressor of recombining binding protein suppressor hairless (RBPJ) and inhibits Notch signaling in neural stem cells, thereby opposing their self-renewal and promoting neurogenesis. This chain is BEN domain-containing protein 6 (BEND6), found in Homo sapiens (Human).